Here is a 105-residue protein sequence, read N- to C-terminus: Synaptic plasticity regulator PANTS (105 aa).

It belongs to the UPF0545 family. Interacts with RTN4 isoform A/Nogo-A; the interaction results in enhanced RTN4-mediated inhibition of AMPA receptor clustering. Also interacts with NCAM1, RANBP2 and CCT8. Post-translationally, rapidly degraded by proteolysis following neuronal stimulation, resulting in increased AMPA receptor clustering. As to expression, in the postnatal brain, expressed diffusely throughout the hippocampus at a low level at 8 weeks (at protein level). At 16 weeks, strongly expressed in the stratum lucidum of the hippocampus (at protein level). In developing and aging brain, expression is strongest in hippocampus, especially in areas CA3 and CA2, throughout the dorsoventral axis.

It is found in the synapse. It localises to the synaptic cleft. Functionally, negatively regulates long-term potentiation and modulates adult synaptic plasticity. Stabilizes the interaction of RTN4 isoform A/Nogo-A with its receptors, inhibiting clustering of postsynaptic AMPA receptors at synaptic sites. Upon neuronal stimulation, degraded at synapses, reducing RTN4 signaling and allowing AMPA receptor clustering at individual synapses. This chain is Synaptic plasticity regulator PANTS, found in Mus musculus (Mouse).